A 98-amino-acid chain; its full sequence is Protein Frey 1 (98 aa).

Residues 13-29 (AGLSLFLHLILAVALLR) form a helical membrane-spanning segment. The disordered stretch occupies residues 60 to 87 (YGILPKHPRPRGPRPLLSRAQQRKRDGP).

Interacts with SPPL2C (via active sites); the interaction stabilizes FREY1 protein and inhibits SPPL2C proteolytic activity. Interacts with IZUMO1; the interaction retains IZUMO1 at the endoplasmic reticulum membrane and coordinates IZUMO1 complex assembly.

It localises to the endoplasmic reticulum membrane. In terms of biological role, key regulator for male fertility expressed transiently in round spermatids where it recruits IZUMO1 at the endoplasmic reticulum (ER) membrane and coordinates the oolemmal binding multimeric complex (IZUMO1 complex) assembly. Upon complete assembly of the IZUMO1 complex, its ER retention is released, facilitating IZUMO1 complex export to the acrosome. Through the interaction with SPPL2C, inhibits its intramembrane protease activity directly accessing the catalytic center of an I-CLiP. This is Protein Frey 1 from Homo sapiens (Human).